The following is a 245-amino-acid chain: Probable phosphatase YcdX (245 aa).

Positions 7, 9, 15, 40, 73, 101, 131, 192, and 194 each coordinate Zn(2+).

The protein belongs to the PHP family. Homotrimer. The cofactor is Zn(2+).

The chain is Probable phosphatase YcdX from Escherichia coli O81 (strain ED1a).